The following is a 360-amino-acid chain: Alanine racemase (360 aa).

The active-site Proton acceptor; specific for D-alanine is Lys-33. Lys-33 carries the post-translational modification N6-(pyridoxal phosphate)lysine. Residue Arg-129 coordinates substrate. Tyr-253 serves as the catalytic Proton acceptor; specific for L-alanine. Met-301 provides a ligand contact to substrate.

It belongs to the alanine racemase family. Pyridoxal 5'-phosphate is required as a cofactor.

It carries out the reaction L-alanine = D-alanine. It functions in the pathway amino-acid biosynthesis; D-alanine biosynthesis; D-alanine from L-alanine: step 1/1. Its function is as follows. Catalyzes the interconversion of L-alanine and D-alanine. May also act on other amino acids. In Xanthomonas campestris pv. campestris (strain 8004), this protein is Alanine racemase (alr).